A 185-amino-acid polypeptide reads, in one-letter code: Der GTPase-activating protein YihI (185 aa).

Disordered stretches follow at residues 1–74 and 145–169; these read MGRS…KKKI and EPEDDEEEIFEEAPVASKKKASSDE. A compositionally biased stretch (basic and acidic residues) spans 23–33; that stretch reads NRSESDVEGRE. Positions 34-47 are enriched in basic residues; sequence RKRVKKRKGLKSGS. The segment covering 48–68 has biased composition (basic and acidic residues); that stretch reads RHSDGSEAKQRKAALARDPRL. A compositionally biased stretch (acidic residues) spans 145-155; sequence EPEDDEEEIFE.

It belongs to the YihI family. As to quaternary structure, interacts with Der.

Its function is as follows. A GTPase-activating protein (GAP) that modifies Der/EngA GTPase function. May play a role in ribosome biogenesis. This is Der GTPase-activating protein YihI from Vibrio atlanticus (strain LGP32) (Vibrio splendidus (strain Mel32)).